Here is a 1005-residue protein sequence, read N- to C-terminus: MSWMFKRDPVWKYLQTVQYGVHGNFSRLSYPTFFPRFEFQDIIPPDDFLTSDEELDSVLFGTLRGHVVGLRYYTGVVNNNEMVALQREPNNPYDKNAIKVNNVNGNQVGYLKKELAAALAYIMDNKLAQIEGVVPYGANNAFTMPLQMTFWGKEENRKAVLDQLKKHGFKLGPAPKTLGFSLESGWGSGRAGPSYSMPVHAAIQMTTEQLKTEFDKLFEDLKEDDKTQEMEPAEAVETPLLPHQKQALAWMVSRENSRELPPFWELRNDLYYNTITNFSEKDQPENVHGGILADDMGLGKTLTAIAVILTNFHDGKPLPVERMKKNQVKKECNSSESDKPGRKDTIKKTDGLSKEGSRYSEEPSISDVKKNKYSMSELSSSQPKRKKIAVQYIESSDSEEIEISELPQKMKGKLKNVQSETKRVKVGPSKIKEDTAFACALTSSASTTTKKILKKGASAQRVQRKLMFEERPRTTLIICPLSVLSNWIDQFGQHIKSDVHLNFYVYYGPDRIRDPALLSKQDIVLTTYNILTHDYGTKGDSPLHSIRWLRVILDEGHAIRNPNAQQTKAVLDLEAERRWVLTGTPIQNSLKDLWSLLSFLKLKPFVDREWWHRTIQRPVTMGDEGGLRRLQSLIKNITLRRTKTSKIKGKPVLELPERPVFIQHITLSDEERKIYQSVKSEGKATIGRYFNEGTVLAHYADVLGLLLRLRQICCHTHLLTNTVSSSGPSGNDTPEELRKKLIKKMKLILSSGSDEECAICLDSLTVPVITHCAHVFCKPCICQCIQNEQPHAKCPLCRNDIHGDNLLECPPEELACDSEKKSNMEWTSSSKINALMHALIDLRTKNPNIKSLVVSQFTTFLSLIETPLKASGFVFTRLDGSMAQKKRVESIQCFQNTEAGSPTIMLLSLKAGGVGLNLCAASRVFLMDPAWNPAAEDQRFDRCHRLGQKQEVIITKFIVKDSVEENMLKIQNTKRELAAGAFGTKKNANEMKQAKINEIRTLIDL.

At arginine 27 the chain carries Omega-N-methylarginine. The DNA-binding element occupies 38 to 287 (EFQDIIPPDD…FSEKDQPENV (250 aa)). Lysine 112 participates in a covalent cross-link: Glycyl lysine isopeptide (Lys-Gly) (interchain with G-Cter in SUMO2). Tyrosine 195 is subject to Phosphotyrosine; by JAK2. Lysine 211 is covalently cross-linked (Glycyl lysine isopeptide (Lys-Gly) (interchain with G-Cter in SUMO2)). 294-301 (DDMGLGKT) serves as a coordination point for ATP. The span at 325 to 361 (KNQVKKECNSSESDKPGRKDTIKKTDGLSKEGSRYSE) shows a compositional bias: basic and acidic residues. A disordered region spans residues 325-385 (KNQVKKECNS…SELSSSQPKR (61 aa)). Positions 373–382 (YSMSELSSSQ) are enriched in polar residues. A phosphoserine mark is found at serine 395, serine 396, and serine 398. A Helicase ATP-binding domain is found at 427-603 (GPSKIKEDTA…WSLLSFLKLK (177 aa)). A DEGH box motif is present at residues 554-557 (DEGH). Threonine 733 is subject to Phosphothreonine. Residues 757–798 (CAICLDSLTVPVITHCAHVFCKPCICQCIQNEQPHAKCPLCR) form an RING-type zinc finger. Required for interaction with the RFBP isoform of ATP11B regions lie at residues 767–772 (PVITHC) and 791–796 (HAKCPL). Positions 834-999 (ALMHALIDLR…EMKQAKINEI (166 aa)) constitute a Helicase C-terminal domain. An interaction with SP1 and SP3 region spans residues 922 to 1005 (SRVFLMDPAW…INEIRTLIDL (84 aa)).

It belongs to the SNF2/RAD54 helicase family. RAD16 subfamily. As to quaternary structure, interacts with SP1 and SP3 independently of DNA; the interaction with these transcriptional factors may be required for basal transcription of target genes. Interacts (via the RING-finger) with isoform RFBP of ATP11B. Progesterone-dependent isoform 1 interacts with EGR1; the interaction requires prior binding to DNA and represses c-Rel via a DNA looping mechanism. Interacts with GATA4. Interacts with PCNA; the interaction promotes polyubiquitination of PCNA through association with the UBE2B-RAD18 and UBE2V2-UBE2N ubiquitin ligase complexes. Interacts with RAD18, SHPRH, UBE2V2 and UBE2N. Phosphorylated on serine, threonine, and tyrosine residues. Tyr-195 phosphorylation is catalyzed by JAK2 in response to prolactin treatment. It is required for DNA binding. As to expression, isoform 1 is expressed preferentially in bladder, cervix, diaphragm, duodenum, epididymis, heart, kidney, liver, lung, ovary (granulosa cells), prostate, spleen, testis (predominantly in the Sertoli cells of the seminiferous tubules) and vagina. Isoform 2 is expressed preferentially in lactating mammary gland and uterine endometrium.

The protein resides in the cytoplasm. It is found in the nucleus. Its subcellular location is the nucleolus. It localises to the nucleoplasm. It carries out the reaction S-ubiquitinyl-[E2 ubiquitin-conjugating enzyme]-L-cysteine + [acceptor protein]-L-lysine = [E2 ubiquitin-conjugating enzyme]-L-cysteine + N(6)-ubiquitinyl-[acceptor protein]-L-lysine.. It participates in protein modification; protein ubiquitination. Functionally, has both helicase and E3 ubiquitin ligase activities. Possesses intrinsic ATP-dependent nucleosome-remodeling activity. This activity may be required for transcriptional activation or repression of specific target promoters. These may include the SERPINE1, to which this protein can bind directly. Mediates repression by c-Rel through a DNA-looping mechanism. Plays a role in error-free postreplication repair (PRR) of damaged DNA and maintains genomic stability through acting as a ubiquitin ligase for 'Lys-63'-linked polyubiquitination of chromatin-bound PCNA. Transcriptional regulator that mediates the ability of prolactin to augment progesterone-dependent transcription of the SCGB1A1/uteroglobin gene through a bipartite progesterone receptor half-site/overlapping Y-box combination (-38/-26) where progesterone activation is attenuated by nuclear factor Y binding. Regulation also involves two GC-rich sequences in the proximal promoter (positions -162/+90) and a RUSH/SMARCA3 site (positions -616/-611) in the 5'-untranslated region. This chain is Helicase-like transcription factor (HLTF), found in Oryctolagus cuniculus (Rabbit).